The primary structure comprises 295 residues: Shikimate dehydrogenase (NADP(+)) (295 aa).

Shikimate-binding positions include 18-20 (SRS) and T66. K70 acts as the Proton acceptor in catalysis. N91 and D106 together coordinate shikimate. Residues 130–134 (GNGGA) and M235 contribute to the NADP(+) site. Y237 is a binding site for shikimate. G258 is a binding site for NADP(+).

The protein belongs to the shikimate dehydrogenase family. As to quaternary structure, homodimer.

It carries out the reaction shikimate + NADP(+) = 3-dehydroshikimate + NADPH + H(+). Its pathway is metabolic intermediate biosynthesis; chorismate biosynthesis; chorismate from D-erythrose 4-phosphate and phosphoenolpyruvate: step 4/7. Functionally, involved in the biosynthesis of the chorismate, which leads to the biosynthesis of aromatic amino acids. Catalyzes the reversible NADPH linked reduction of 3-dehydroshikimate (DHSA) to yield shikimate (SA). The polypeptide is Shikimate dehydrogenase (NADP(+)) (Chlorobium phaeobacteroides (strain DSM 266 / SMG 266 / 2430)).